The chain runs to 495 residues: MERDERPPSGGGGGGGSAGFLEPPAALPPPPRNGFCQDELAELDPGTNGETDSLTLGQGHIPVSVPDDRAEQRTCLICGDRATGLHYGIISCEGCKGFFKRSICNKRVYRCSRDKNCVMSRKQRNRCQYCRLLKCLQMGMNRKAIREDGMPGGRNKSIGPVQISEEEIERIMSGQEFEEEANHWSNHGDSDHSSPGNRASESNQPSPGSTLSSSRSVELNGFMAFRDQYMGMSVPPHYQYIPHLFSYSGHSPLLPPQARSLDPQSYSLIHQLMSAEDLEPLGTPMLIEDGYAVTQAELFALLCRLADELLFRQIAWIKKLPFFCELSIKDYTCLLSSTWQELILLSSLTVYSKQIFGELADVTAKYSPSDEELHRFSDEGMEVIERLIYLYHKFHQLKVSNEEYACMKAINFLNQDIRGLTSASQLEQLNKRYWYICQDFTEYKYTHQPNRFPDLMMCLPEIRYIAGKMVNVPLEQLPLLFKVVLHSCKTSTVKE.

The interval 1-34 is disordered; that stretch reads MERDERPPSGGGGGGGSAGFLEPPAALPPPPRNG. Residues 9–18 are compositionally biased toward gly residues; that stretch reads SGGGGGGGSA. Positions 72–147 form a DNA-binding region, nuclear receptor; that stretch reads QRTCLICGDR…MGMNRKAIRE (76 aa). Zn(2+) contacts are provided by Cys-75, Cys-78, Cys-92, Cys-95, Cys-111, Cys-117, Cys-127, and Cys-130. 2 consecutive NR C4-type zinc fingers follow at residues 75–95 and 111–135; these read CLIC…CEGC and CSRD…LLKC. 2 disordered regions span residues 145-165 and 177-214; these read IRED…QISE and FEEE…LSSS. The span at 180–192 shows a compositional bias: basic and acidic residues; that stretch reads EANHWSNHGDSDH. The sufficient for interaction with UIMC1 stretch occupies residues 187-268; it reads HGDSDHSSPG…RSLDPQSYSL (82 aa). Low complexity predominate over residues 202-214; sequence SNQPSPGSTLSSS. Residues 264–495 form the NR LBD domain; it reads QSYSLIHQLM…HSCKTSTVKE (232 aa).

The protein belongs to the nuclear hormone receptor family. NR6 subfamily. Homodimer. Interacts with UIMC1. In terms of tissue distribution, expressed in the germ cells of both the adult testis and ovary, being most abundant in spermatids.

It localises to the nucleus. Functionally, orphan nuclear receptor that binds to a response element containing the sequence 5'-TCAAGGTCA-3'. Acts as a regulator of embryonic stem cell pluripotency by mediating repression of POU5F1/OCT4: binds to the DR0 element within the POU5F1/OCT4 promoter and inhibits POU5F1/OCT4 expression during embryonic stem cell differentiation. Required to restrict POU5F1/OCT4 expression to the germ cell lineage. Involved in the regulation of gene expression in germ cell development during gametogenesis. The protein is Nuclear receptor subfamily 6 group A member 1 (Nr6a1) of Mus musculus (Mouse).